Here is a 188-residue protein sequence, read N- to C-terminus: MSLISRLRAVVAGDDYLDGELDDFAYDDEQDDQDQRALQADGGALATIGDSNPFDLGGDLPGSNVIGMPGISNAAAEVNVMEPRSFDEMPRAIQALRERKTVILNLTMMEPDQAQRAVDFVAGGTFAIDGHQERVGESIFLFAPSCVTVTNTGHDEASAPTVVSREADAADVDEYASAPSPAWGAAAL.

This sequence belongs to the SepF family. As to quaternary structure, homodimer. Interacts with FtsZ.

Its subcellular location is the cytoplasm. Functionally, cell division protein that is part of the divisome complex and is recruited early to the Z-ring. Probably stimulates Z-ring formation, perhaps through the cross-linking of FtsZ protofilaments. Its function overlaps with FtsA. This chain is Cell division protein SepF, found in Synechococcus sp. (strain CC9605).